Consider the following 310-residue polypeptide: Peroxidase 44 (310 aa).

The signal sequence occupies residues 1-20; the sequence is MRSITALFFLFCFLAPSALA. Cystine bridges form between cysteine 31-cysteine 110, cysteine 64-cysteine 69, cysteine 116-cysteine 305, and cysteine 194-cysteine 218. Residue histidine 62 is the Proton acceptor of the active site. Positions 63, 66, 68, 70, and 72 each coordinate Ca(2+). Proline 156 provides a ligand contact to substrate. Histidine 187 is a binding site for heme b. Serine 188 lines the Ca(2+) pocket. Ca(2+) is bound by residues aspartate 229, threonine 232, and aspartate 237.

The protein belongs to the peroxidase family. Classical plant (class III) peroxidase subfamily. It depends on heme b as a cofactor. Requires Ca(2+) as cofactor.

The protein resides in the secreted. The catalysed reaction is 2 a phenolic donor + H2O2 = 2 a phenolic radical donor + 2 H2O. Functionally, removal of H(2)O(2), oxidation of toxic reductants, biosynthesis and degradation of lignin, suberization, auxin catabolism, response to environmental stresses such as wounding, pathogen attack and oxidative stress. These functions might be dependent on each isozyme/isoform in each plant tissue. This Arabidopsis thaliana (Mouse-ear cress) protein is Peroxidase 44 (PER44).